Here is a 142-residue protein sequence, read N- to C-terminus: Pro-vaccinia growth factor (142 aa).

The N-terminal stretch at 1–18 (MSMKYLMLLFAAMIIRSF) is a signal peptide. Residues 19 to 100 (ADSGNAIETT…SENPNTTTSY (82 aa)) lie on the Extracellular side of the membrane. Residue Asn-34 is glycosylated (N-linked (GlcNAc...) asparagine; by host). The EGF-like domain occupies 41-81 (AIRLCGPEGDGYCLHGDCIHARDIDGMYCRCSHGYTGIRCQ). 3 disulfide bridges follow: Cys-45/Cys-58, Cys-53/Cys-69, and Cys-71/Cys-80. The N-linked (GlcNAc...) asparagine; by host glycan is linked to Asn-95. A helical membrane pass occupies residues 101 to 121 (IPSPGIMLVLVGIIIIITCCL). Residues 122 to 142 (LSVYRFTRRTNKLPLQDMVVP) lie on the Cytoplasmic side of the membrane.

Belongs to the orthopoxvirus OPG019 family. As to quaternary structure, vaccinia growth factor interacts with host EGFR and promotes EGFR dimerization.

It is found in the host membrane. Its subcellular location is the secreted. Functionally, stimulates cellular proliferation (hyperplasia)and mobility around infected cells to promote rapid and efficient spread of infection. This effect is beneficial for virus replication in vivo, because poxviruses replicate possibly better in proliferating cells than in quiescent cells. Acts by binding host EGFR, inducing its dimerization, autophosphorylation and leading to activation of several cellular pathways regulating cell proliferation or cell survival. The activation by host EGFR of mitogen activated protein kinases (MAPK) and extracellular-signal regulated kinases (ERK) are essential for the positive effect of vaccinia growth factor on poxvirus virulence in vivo. This Vaccinia virus (strain Copenhagen) (VACV) protein is Pro-vaccinia growth factor (OPG019).